Reading from the N-terminus, the 263-residue chain is Ret finger protein-like 4B (263 aa).

The RING-type zinc-finger motif lies at 11 to 53 (CPVCLDFFSCSISLSCTHVFCFDCIQRYILENHDFRAMCPLCR). Positions 76–263 (HNSRLEQSLH…ESGNVLTICP (188 aa)) constitute a B30.2/SPRY domain.

This Homo sapiens (Human) protein is Ret finger protein-like 4B (RFPL4B).